A 766-amino-acid polypeptide reads, in one-letter code: BMP/retinoic acid-inducible neural-specific protein 3 (766 aa).

The first 33 residues, 1–33 (MIWRSRAGAELFSLMALWEWIALSLHCWVLAVA), serve as a signal peptide directing secretion. The MACPF domain occupies 74-264 (RYKIYREFGR…FVQAALSYIA (191 aa)). Residues asparagine 168, asparagine 337, asparagine 456, asparagine 562, asparagine 609, and asparagine 641 are each glycosylated (N-linked (GlcNAc...) asparagine).

Belongs to the BRINP family. In terms of tissue distribution, strongly expressed in oral keratinocytes compared to the weak expression in tongue squamous cell carcinoma (SCC). Expressed in endothelial and aortic smooth muscle cells. Overexpressed in gonadotropinomas compared to normal pituitarie tissues.

It is found in the secreted. The protein resides in the mitochondrion. Inhibits neuronal cell proliferation by negative regulation of the cell cycle transition. Promotes pituitary gonadotrope cell proliferation, migration and invasion, when overexpressed. May play a role in cell pituitary tumor development. This is BMP/retinoic acid-inducible neural-specific protein 3 (BRINP3) from Homo sapiens (Human).